A 103-amino-acid chain; its full sequence is Urease subunit beta (103 aa).

This sequence belongs to the urease beta subunit family. In terms of assembly, heterotrimer of UreA (gamma), UreB (beta) and UreC (alpha) subunits. Three heterotrimers associate to form the active enzyme.

The protein resides in the cytoplasm. The enzyme catalyses urea + 2 H2O + H(+) = hydrogencarbonate + 2 NH4(+). It functions in the pathway nitrogen metabolism; urea degradation; CO(2) and NH(3) from urea (urease route): step 1/1. This chain is Urease subunit beta, found in Streptomyces coelicolor (strain ATCC BAA-471 / A3(2) / M145).